The following is a 421-amino-acid chain: MNLAHTTVLLWAWGSLQAFEIVEKENIFQRTPCPAFLMFDNAAYLTDMSFELPCPCKPEEVSAVVWYYQKHLGSSHTKVLTDFDGRVLTEAAQVRVGSDMLVRFSIRMFSLLVFRAQPEDSGLYFCGTRKGDYFYAYDVDIQSSEGMVATFKDQGQEPLEDEYHGSLRVFTTFWEWTPCDRCGVRGEQWRIGLCYLQSPDLSPRYRKILPNVVSCGSRAVPRQLRAKASDHNPELLVRSCLMPCEKKKKVQEGVMAIFNYVSKVGSRPWLPQVPIQFHQQRLGHGLIISCPGARPEHAVAWDKDHQYLYRTQYLKGVNGSMRVFIDHGNHLHIRFTQLEDRGIYYCWRQGERIAGFRLGVTSPGRYPVSFSDPETRAALGLILIGYMLITVIFISIHLCRCCCYLFRFCPNFSPRLSRPQL.

The signal sequence occupies residues 1–18 (MNLAHTTVLLWAWGSLQA). The Extracellular portion of the chain corresponds to 19-377 (FEIVEKENIF…VSFSDPETRA (359 aa)). One can recognise an Ig-like V-type domain in the interval 268–362 (PWLPQVPIQF…IAGFRLGVTS (95 aa)). A disulfide bridge links Cys-290 with Cys-346. The N-linked (GlcNAc...) asparagine glycan is linked to Asn-318. The helical transmembrane segment at 378 to 398 (ALGLILIGYMLITVIFISIHL) threads the bilayer. Residues 399–421 (CRCCCYLFRFCPNFSPRLSRPQL) are Cytoplasmic-facing.

It belongs to the FAM187 family.

Its subcellular location is the membrane. This is Ig-like V-type domain-containing protein FAM187A (FAM187A) from Bos taurus (Bovine).